Here is a 93-residue protein sequence, read N- to C-terminus: Islet amyloid polypeptide (93 aa).

The signal sequence occupies residues 1-23 (MMCISKLPAVLLILSVALNHLRA). Positions 24 to 35 (TPVRSGSNPQMD) are excised as a propeptide. Cysteine 39 and cysteine 44 are disulfide-bonded. Residues 64–93 (LPPTNVGSNTYGKRNAAGDPNRESLDFLLV) are disordered. The residue at position 74 (tyrosine 74) is a Tyrosine amide. A propeptide spanning residues 78–93 (NAAGDPNRESLDFLLV) is cleaved from the precursor. A compositionally biased stretch (basic and acidic residues) spans 83-93 (PNRESLDFLLV).

Belongs to the calcitonin family. As to quaternary structure, can form homodimers. Interacts with IDE and INS. Interaction with INS inhibits homodimerization and fibril formation.

The protein localises to the secreted. Its function is as follows. Amylin/IAPP is a glucoregulatory peptide hormone that plays an important role in the regulation of energy homeostasis. Selectively inhibits insulin-stimulated glucose utilization and glycogen deposition in muscle, while not affecting adipocyte glucose metabolism. IAPP function is mediated by the CALCR-RAMPs (AMYRs) receptor complexes. Amylin can also bind CALCR receptor in the absence of RAMPs, although it is more selective for AMYRs. This Mus musculus (Mouse) protein is Islet amyloid polypeptide.